Reading from the N-terminus, the 79-residue chain is EAMZP30-47 protein (79 aa).

The segment covering 1 to 12 has biased composition (low complexity); it reads HAASPRGRPQQR. A disordered region spans residues 1–47; the sequence is HAASPRGRPQQRSSRHGAEGPDTTRRGSCCSSSSSCCRPSTPRHPHN. Basic and acidic residues predominate over residues 16–25; that stretch reads HGAEGPDTTR. Over residues 28-37 the composition is skewed to low complexity; sequence SCCSSSSSCC.

The protein localises to the membrane. Its subcellular location is the cell membrane. It is found in the cytoplasmic vesicle. The protein resides in the secretory vesicle. It localises to the rhoptry. This Eimeria acervulina (Coccidian parasite) protein is EAMZP30-47 protein (CMC17).